An 89-amino-acid chain; its full sequence is Small ribosomal subunit protein uS15 (89 aa).

This sequence belongs to the universal ribosomal protein uS15 family. In terms of assembly, part of the 30S ribosomal subunit. Forms a bridge to the 50S subunit in the 70S ribosome, contacting the 23S rRNA.

In terms of biological role, one of the primary rRNA binding proteins, it binds directly to 16S rRNA where it helps nucleate assembly of the platform of the 30S subunit by binding and bridging several RNA helices of the 16S rRNA. Its function is as follows. Forms an intersubunit bridge (bridge B4) with the 23S rRNA of the 50S subunit in the ribosome. The polypeptide is Small ribosomal subunit protein uS15 (Staphylococcus aureus (strain JH1)).